We begin with the raw amino-acid sequence, 1056 residues long: ATP-dependent helicase wrn-1 (1056 aa).

Positions 1–102 (MISDDDDLPS…SSSDDSDQGD (102 aa)) are disordered. 2 repeat units span residues 17 to 26 (NEELPETEPE) and 28 to 37 (NDELPETEPE). Positions 17–37 (NEELPETEPEDNDELPETEPE) are 2 X 10 AA repeats of N-[ED]-E-L-P-E-T-E-P-E. Residues 19-38 (ELPETEPEDNDELPETEPES) are compositionally biased toward acidic residues. Polar residues predominate over residues 43–53 (PTVTSNKTENQ). Residues 54 to 63 (VADEDYDSFD) are compositionally biased toward acidic residues. Positions 236-406 (VRNVLGGKDQ…IANLRLRKPL (171 aa)) constitute a Helicase ATP-binding domain. Residue 249-256 (MSTGYGKS) coordinates ATP. The DEAH box motif lies at 348–351 (DEAH). One can recognise a Helicase C-terminal domain in the interval 427 to 583 (MAEDLGLFMK…NLTMMLRQLE (157 aa)). Zn(2+) is bound by residues cysteine 591, cysteine 614, cysteine 615, and cysteine 618. The disordered stretch occupies residues 749–771 (KEKAAPSTVPGASRSQSTKSSTE). A compositionally biased stretch (polar residues) spans 761-771 (SRSQSTKSSTE). Residues 806 to 886 (PEKIDQLRSR…VQFSKETGIA (81 aa)) form the HRDC domain. The segment at 1018 to 1056 (QEKPDIQSMPSTSNPSTIKTVPSTPSSSLRAPPLKKFKL) is disordered. The span at 1025–1046 (SMPSTSNPSTIKTVPSTPSSSL) shows a compositional bias: polar residues.

Belongs to the helicase family. RecQ subfamily. Requires Zn(2+) as cofactor.

The protein localises to the nucleus. The catalysed reaction is Couples ATP hydrolysis with the unwinding of duplex DNA by translocating in the 3'-5' direction.. It catalyses the reaction ATP + H2O = ADP + phosphate + H(+). In terms of biological role, essential for the formation of DNA replication focal centers; stably associates with foci elements generating binding sites for RP-A. Exhibits a magnesium-dependent ATP-dependent 3'-5' DNA-helicase activity. May be involved in the control of genomic stability. This chain is ATP-dependent helicase wrn-1 (wrn-1), found in Caenorhabditis elegans.